The primary structure comprises 325 residues: uncharacterized protein (325 aa).

The signal sequence occupies residues 1–26; that stretch reads MQGRVAGSCAPLGLLLVCLHLPGLFA. The segment covering 41–60 has biased composition (polar residues); sequence GTNLPQLGQPSSTGPSNSEH. Disordered stretches follow at residues 41–110 and 147–189; these read GTNL…MDSW and GSGP…AGGK. Residues 147–157 show a composition bias toward low complexity; sequence GSGPLPGESSP.

Binds to numerous extracellular matrix proteins. Expressed in skin and tonsils.

It is found in the secreted. It localises to the extracellular space. The protein localises to the extracellular matrix. This is an uncharacterized protein from Homo sapiens (Human).